We begin with the raw amino-acid sequence, 35 residues long: Photosystem II reaction center protein T (35 aa).

Residues alanine 3–phenylalanine 23 form a helical membrane-spanning segment.

The protein belongs to the PsbT family. In terms of assembly, PSII is composed of 1 copy each of membrane proteins PsbA, PsbB, PsbC, PsbD, PsbE, PsbF, PsbH, PsbI, PsbJ, PsbK, PsbL, PsbM, PsbT, PsbX, PsbY, Psb30/Ycf12, peripheral proteins PsbO, CyanoQ (PsbQ), PsbU, PsbV and a large number of cofactors. It forms dimeric complexes.

The protein resides in the cellular thylakoid membrane. Found at the monomer-monomer interface of the photosystem II (PS II) dimer, plays a role in assembly and dimerization of PSII. PSII is a light-driven water plastoquinone oxidoreductase, using light energy to abstract electrons from H(2)O, generating a proton gradient subsequently used for ATP formation. The polypeptide is Photosystem II reaction center protein T (Prochlorococcus marinus (strain MIT 9303)).